A 214-amino-acid polypeptide reads, in one-letter code: Probable transaldolase (214 aa).

Lys-83 acts as the Schiff-base intermediate with substrate in catalysis.

Belongs to the transaldolase family. Type 3B subfamily.

It localises to the cytoplasm. It catalyses the reaction D-sedoheptulose 7-phosphate + D-glyceraldehyde 3-phosphate = D-erythrose 4-phosphate + beta-D-fructose 6-phosphate. It functions in the pathway carbohydrate degradation; pentose phosphate pathway; D-glyceraldehyde 3-phosphate and beta-D-fructose 6-phosphate from D-ribose 5-phosphate and D-xylulose 5-phosphate (non-oxidative stage): step 2/3. In terms of biological role, transaldolase is important for the balance of metabolites in the pentose-phosphate pathway. The polypeptide is Probable transaldolase (tal) (Streptococcus pyogenes serotype M1).